A 150-amino-acid chain; its full sequence is Anthranilate synthase component 1 (150 aa).

Position 40 (S40) interacts with L-tryptophan. R119 is a binding site for chorismate.

Belongs to the anthranilate synthase component I family. In terms of assembly, heterotetramer consisting of two non-identical subunits: a beta subunit (TrpG) and a large alpha subunit (TrpE). It depends on Mg(2+) as a cofactor.

It carries out the reaction chorismate + L-glutamine = anthranilate + pyruvate + L-glutamate + H(+). The protein operates within amino-acid biosynthesis; L-tryptophan biosynthesis; L-tryptophan from chorismate: step 1/5. Feedback inhibited by tryptophan. Its function is as follows. Part of a heterotetrameric complex that catalyzes the two-step biosynthesis of anthranilate, an intermediate in the biosynthesis of L-tryptophan. In the first step, the glutamine-binding beta subunit (TrpG) of anthranilate synthase (AS) provides the glutamine amidotransferase activity which generates ammonia as a substrate that, along with chorismate, is used in the second step, catalyzed by the large alpha subunit of AS (TrpE) to produce anthranilate. In the absence of TrpG, TrpE can synthesize anthranilate directly from chorismate and high concentrations of ammonia. The protein is Anthranilate synthase component 1 (trpE) of Citrobacter freundii.